The primary structure comprises 469 residues: 3-isopropylmalate dehydratase large subunit 2 (469 aa).

The [4Fe-4S] cluster site is built by cysteine 347, cysteine 408, and cysteine 411.

It belongs to the aconitase/IPM isomerase family. LeuC type 1 subfamily. As to quaternary structure, heterodimer of LeuC and LeuD. [4Fe-4S] cluster serves as cofactor.

The enzyme catalyses (2R,3S)-3-isopropylmalate = (2S)-2-isopropylmalate. Its pathway is amino-acid biosynthesis; L-leucine biosynthesis; L-leucine from 3-methyl-2-oxobutanoate: step 2/4. Its function is as follows. Catalyzes the isomerization between 2-isopropylmalate and 3-isopropylmalate, via the formation of 2-isopropylmaleate. The sequence is that of 3-isopropylmalate dehydratase large subunit 2 from Mannheimia succiniciproducens (strain KCTC 0769BP / MBEL55E).